Consider the following 345-residue polypeptide: Ferrochelatase (345 aa).

His-215 and Glu-296 together coordinate Fe cation.

Belongs to the ferrochelatase family.

Its subcellular location is the cytoplasm. It catalyses the reaction heme b + 2 H(+) = protoporphyrin IX + Fe(2+). Its pathway is porphyrin-containing compound metabolism; protoheme biosynthesis; protoheme from protoporphyrin-IX: step 1/1. Functionally, catalyzes the ferrous insertion into protoporphyrin IX. The chain is Ferrochelatase from Rhodopseudomonas palustris (strain TIE-1).